The following is a 27-amino-acid chain: Cupiennin-3a (27 aa).

A Glutamic acid 1-amide modification is found at Glu-27.

In terms of tissue distribution, expressed by the venom gland.

The protein localises to the secreted. The protein is Cupiennin-3a of Cupiennius salei (American wandering spider).